The sequence spans 740 residues: N-acetylated-alpha-linked acidic dipeptidase 2 (740 aa).

The Cytoplasmic portion of the chain corresponds to M1–L7. Residues R8–I31 traverse the membrane as a helical; Signal-anchor for type II membrane protein segment. The Extracellular segment spans residues K32–L740. N111, N143, and N185 each carry an N-linked (GlcNAc...) asparagine glycan. Substrate is bound by residues R200 and N247. Ca(2+) is bound by residues T259 and Y262. The interval A264–L577 is NAALADase. A glycan (N-linked (GlcNAc...) asparagine) is linked at N314. Zn(2+) is bound by residues H367 and D377. E414 is a substrate binding site. E414 acts as the Nucleophile; for NAALADase activity in catalysis. Residue E415 coordinates Zn(2+). Ca(2+) is bound by residues E423 and E426. D443 contributes to the Zn(2+) binding site. N-linked (GlcNAc...) asparagine glycosylation occurs at N449. Substrate contacts are provided by residues S507 to G508, R524 to R526, Y542, and Y542 to H543. A Zn(2+)-binding site is contributed by H543. N-linked (GlcNAc...) asparagine glycosylation is present at N603. The Charge relay system role is filled by S618. A glycan (N-linked (GlcNAc...) asparagine) is linked at N628. Residues D656 and H679 each act as charge relay system in the active site. Residue K689–Y690 coordinates substrate.

The protein belongs to the peptidase M28 family. M28B subfamily. Homodimer. Zn(2+) is required as a cofactor. Expressed ovary, testes and lung, but not brain.

The protein localises to the cell membrane. The enzyme catalyses Release of an unsubstituted, C-terminal glutamyl residue, typically from Ac-Asp-Glu or folylpoly-gamma-glutamates.. In terms of biological role, has N-acetylated-alpha-linked-acidic dipeptidase (NAALADase) activity. Also exhibits a dipeptidyl-peptidase IV type activity. Inactivates the peptide neurotransmitter N-acetylaspartylglutamate. The protein is N-acetylated-alpha-linked acidic dipeptidase 2 (Naalad2) of Mus musculus (Mouse).